The primary structure comprises 303 residues: Glutathione transport system permease protein GsiD (303 aa).

6 helical membrane-spanning segments follow: residues 40 to 60 (AMTA…ARWI), 105 to 125 (LAAG…LGLL), 144 to 164 (LFAF…GSGI), 165 to 185 (ANVI…LVRG), 222 to 242 (IVVF…SLSF), and 266 to 286 (VIAP…VLAF). Positions 101–290 (AQISLAAGVF…LTVLAFNLLG (190 aa)) constitute an ABC transmembrane type-1 domain.

Belongs to the binding-protein-dependent transport system permease family. In terms of assembly, the complex is composed of two ATP-binding proteins (GsiA), two transmembrane proteins (GsiC and GsiD) and a solute-binding protein (GsiB).

The protein localises to the cell inner membrane. Functionally, part of the ABC transporter complex GsiABCD involved in glutathione import. Probably responsible for the translocation of the substrate across the membrane. The chain is Glutathione transport system permease protein GsiD from Escherichia coli O1:K1 / APEC.